The sequence spans 313 residues: Probable F-box protein At3g44130 (313 aa).

Residues 1–46 form the F-box domain; it reads MASGNLPWELEEEILCRLPLGSLVRLRSVCKHWNDFFNDKWFIKKS.

This Arabidopsis thaliana (Mouse-ear cress) protein is Probable F-box protein At3g44130.